A 342-amino-acid chain; its full sequence is Photosystem II assembly lipoprotein Ycf48 (342 aa).

The signal sequence occupies residues 1–28 (MPVKFPSLKFEQLKQLVLVAAIAVFCVS). A lipid anchor (N-palmitoyl cysteine) is attached at Cys-29. Cys-29 carries S-diacylglycerol cysteine lipidation. Positions 196 to 220 (RGNFYSTWAPGQTEWTPHNRNSSRR) match the Arg-rich patch motif. Residues 340-342 (MVP) constitute a propeptide that is removed on maturation.

Belongs to the Ycf48 family. Part of early PSII assembly complexes which includes D1 (psbA) and PsbI; not found in mature PSII. By two-hybrid analysis in yeast interacts with precursor and intermediate forms of D1, but less with mature D1. Binds to the lumenal side of PSI and PSII complexes. Coimmunoprecipitates with YidC. Purified chlorophyll- and carotenoid-containing photosystem II (PSII) assembly intermediate complex RCII* (iD1, D1, D2, PsbE, PsbF, PsbI, Ycf39, Ycf48, HliC and HliD). In terms of processing, the last 3 residues are removed in the mature protein.

The protein resides in the cellular thylakoid membrane. Its function is as follows. A factor required for optimal assembly of photosystem II (PSII) which acts in the early stages of PSII assembly. Also plays a role in replacement of photodamaged D1 (psbA). May interact with precursor D1 to prevent its premature processing before association with D2 (psbD). May also play a role in chlorophyll insertion into chlorophyll-binding proteins. Increasing levels of chlorophyll precursors partially suppresses deletion of this protein, supporting the idea that Ycf48 assists YidC in synthesis of chlorophyll-binding proteins. The Ycf39-Hlip complex binds D1 at an early stage of PSII assembly along with Ycf48, ribosomes and ChlG, the last enzyme in chlorophyll biosynthesis; it may be involved in chlorophyll reuse and delivery to D1 in the initial stages of PSII assembly. The chain is Photosystem II assembly lipoprotein Ycf48 from Synechocystis sp. (strain ATCC 27184 / PCC 6803 / Kazusa).